The primary structure comprises 90 residues: MSRTVFCQNLNKEAEGLGFQLYPGEIGKRIFDNISKEAWTIWQKKQTMLINEKKMNMMNVDDRAFLEAAMVAYLFEGKEPEIEGYVPPSK.

This sequence belongs to the Fe(2+)-trafficking protein family.

Functionally, could be a mediator in iron transactions between iron acquisition and iron-requiring processes, such as synthesis and/or repair of Fe-S clusters in biosynthetic enzymes. This is Probable Fe(2+)-trafficking protein from Colwellia psychrerythraea (strain 34H / ATCC BAA-681) (Vibrio psychroerythus).